A 237-amino-acid chain; its full sequence is UPF0280 protein Mpal_1292 (237 aa).

This sequence belongs to the UPF0280 family.

The polypeptide is UPF0280 protein Mpal_1292 (Methanosphaerula palustris (strain ATCC BAA-1556 / DSM 19958 / E1-9c)).